The primary structure comprises 317 residues: ADP-L-glycero-D-manno-heptose-6-epimerase (317 aa).

NADP(+) is bound by residues Phe-10–Ile-11, Asp-31–Asp-32, Lys-38, Lys-53, Gln-75–Ser-79, and Asn-92. Catalysis depends on Tyr-139, which acts as the Proton acceptor. Lys-143 contributes to the NADP(+) binding site. Asn-166 provides a ligand contact to substrate. Residues Val-167 and Lys-175 each coordinate NADP(+). Lys-175 serves as the catalytic Proton acceptor. Substrate-binding positions include Gly-177, His-184, Phe-198 to His-201, Arg-211, and Tyr-275.

This sequence belongs to the NAD(P)-dependent epimerase/dehydratase family. HldD subfamily. In terms of assembly, homopentamer. Requires NADP(+) as cofactor.

The enzyme catalyses ADP-D-glycero-beta-D-manno-heptose = ADP-L-glycero-beta-D-manno-heptose. Its pathway is nucleotide-sugar biosynthesis; ADP-L-glycero-beta-D-manno-heptose biosynthesis; ADP-L-glycero-beta-D-manno-heptose from D-glycero-beta-D-manno-heptose 7-phosphate: step 4/4. In terms of biological role, catalyzes the interconversion between ADP-D-glycero-beta-D-manno-heptose and ADP-L-glycero-beta-D-manno-heptose via an epimerization at carbon 6 of the heptose. This chain is ADP-L-glycero-D-manno-heptose-6-epimerase, found in Shewanella loihica (strain ATCC BAA-1088 / PV-4).